The following is a 662-amino-acid chain: DNA topoisomerase 4 subunit B (662 aa).

Residues Tyr-20, Asn-60, Asp-87, 129 to 135 (GLHGVGV), and Lys-359 contribute to the ATP site. Residues 439–553 (TELFIVEGDS…DGHLYLAKPP (115 aa)) form the Toprim domain. Mg(2+) contacts are provided by Glu-445, Asp-518, and Asp-520.

It belongs to the type II topoisomerase family. ParE type 1 subfamily. Heterotetramer composed of ParC and ParE. Mg(2+) is required as a cofactor. Requires Mn(2+) as cofactor. The cofactor is Ca(2+).

The catalysed reaction is ATP-dependent breakage, passage and rejoining of double-stranded DNA.. Functionally, topoisomerase IV is essential for chromosome segregation. It relaxes supercoiled DNA. Performs the decatenation events required during the replication of a circular DNA molecule. The sequence is that of DNA topoisomerase 4 subunit B from Rickettsia bellii (strain RML369-C).